Consider the following 37-residue polypeptide: Large ribosomal subunit protein bL36c (37 aa).

The protein belongs to the bacterial ribosomal protein bL36 family.

The protein localises to the plastid. It is found in the chloroplast. This Thalassiosira pseudonana (Marine diatom) protein is Large ribosomal subunit protein bL36c.